A 954-amino-acid chain; its full sequence is Glucosidase 2 subunit alpha (954 aa).

The N-terminal stretch at 1–22 (MVLLKWLVCQLVFFTAFSHAFT) is a signal peptide. N-linked (GlcNAc...) asparagine glycans are attached at residues N114, N126, N142, N173, and N345. The Nucleophile role is filled by D537. Residue E540 is part of the active site. D614 functions as the Proton donor in the catalytic mechanism. N-linked (GlcNAc...) asparagine glycosylation is found at N783, N791, N867, N880, N907, and N941.

It belongs to the glycosyl hydrolase 31 family. As to quaternary structure, heterodimer of a catalytic subunit alpha (ROT2) and a subunit beta (GTB1).

The protein localises to the endoplasmic reticulum. The enzyme catalyses N(4)-(alpha-D-Glc-(1-&gt;3)-alpha-D-Man-(1-&gt;2)-alpha-D-Man-(1-&gt;2)-alpha-D-Man-(1-&gt;3)-[alpha-D-Man-(1-&gt;2)-alpha-D-Man-(1-&gt;3)-[alpha-D-Man-(1-&gt;2)-alpha-D-Man-(1-&gt;6)]-alpha-D-Man-(1-&gt;6)]-beta-D-Man-(1-&gt;4)-beta-D-GlcNAc-(1-&gt;4)-beta-D-GlcNAc)-L-asparaginyl-[protein] + H2O = N(4)-(alpha-D-Man-(1-&gt;2)-alpha-D-Man-(1-&gt;2)-alpha-D-Man-(1-&gt;3)-[alpha-D-Man-(1-&gt;2)-alpha-D-Man-(1-&gt;3)-[alpha-D-Man-(1-&gt;2)-alpha-D-Man-(1-&gt;6)]-alpha-D-Man-(1-&gt;6)]-beta-D-Man-(1-&gt;4)-beta-D-GlcNAc-(1-&gt;4)-beta-D-GlcNAc)-L-asparaginyl-[protein] (N-glucan mannose isomer 9A1,2,3B1,2,3) + beta-D-glucose. It carries out the reaction N(4)-(alpha-D-Glc-(1-&gt;3)-alpha-D-Glc-(1-&gt;3)-alpha-D-Man-(1-&gt;2)-alpha-D-Man-(1-&gt;2)-alpha-D-Man-(1-&gt;3)-[alpha-D-Man-(1-&gt;2)-alpha-D-Man-(1-&gt;3)-[alpha-D-Man-(1-&gt;2)-alpha-D-Man-(1-&gt;6)]-alpha-D-Man-(1-&gt;6)]-beta-D-Man-(1-&gt;4)-beta-D-GlcNAc-(1-&gt;4)-beta-D-GlcNAc)-L-asparaginyl-[protein] + H2O = N(4)-(alpha-D-Glc-(1-&gt;3)-alpha-D-Man-(1-&gt;2)-alpha-D-Man-(1-&gt;2)-alpha-D-Man-(1-&gt;3)-[alpha-D-Man-(1-&gt;2)-alpha-D-Man-(1-&gt;3)-[alpha-D-Man-(1-&gt;2)-alpha-D-Man-(1-&gt;6)]-alpha-D-Man-(1-&gt;6)]-beta-D-Man-(1-&gt;4)-beta-D-GlcNAc-(1-&gt;4)-beta-D-GlcNAc)-L-asparaginyl-[protein] + beta-D-glucose. It participates in glycan metabolism; N-glycan metabolism. Inhibited by glucose, maltose and nigerose, and by the antibiotic deoxynojirimycin. Functionally, catalytic subunit of glucosidase 2, which cleaves sequentially the 2 innermost alpha-1,3-linked glucose residues from the Glc(2)Man(9)GlcNAc(2) oligosaccharide precursor of immature glycoproteins. This is Glucosidase 2 subunit alpha (ROT2) from Saccharomyces cerevisiae (strain ATCC 204508 / S288c) (Baker's yeast).